A 600-amino-acid polypeptide reads, in one-letter code: Probable translation initiation factor IF-2 (600 aa).

Residues 13-228 (LRTPIVAVLG…VLMGLAQRYM (216 aa)) enclose the tr-type G domain. Positions 22 to 29 (GHVDHGKT) are G1. Residue 22 to 29 (GHVDHGKT) coordinates GTP. The G2 stretch occupies residues 47–51 (AITQH). Residues 84-87 (DTPG) form a G3 region. Residues 84 to 88 (DTPGH) and 138 to 141 (NKID) contribute to the GTP site. Residues 138–141 (NKID) form a G4 region. Residues 140-162 (IDTTPGWNPNPDAPVQGTYDDQS) are disordered. Residues 206 to 208 (SAE) form a G5 region.

Belongs to the TRAFAC class translation factor GTPase superfamily. Classic translation factor GTPase family. IF-2 subfamily.

In terms of biological role, function in general translation initiation by promoting the binding of the formylmethionine-tRNA to ribosomes. Seems to function along with eIF-2. This is Probable translation initiation factor IF-2 from Halobacterium salinarum (strain ATCC 700922 / JCM 11081 / NRC-1) (Halobacterium halobium).